Reading from the N-terminus, the 261-residue chain is Small ribosomal subunit protein eS1z (261 aa).

Basic residues predominate over residues 1–18; it reads MAVGKNKRISKGKKGGKK. A disordered region spans residues 1-20; the sequence is MAVGKNKRISKGKKGGKKKA.

This sequence belongs to the eukaryotic ribosomal protein eS1 family. As to quaternary structure, component of the small ribosomal subunit. Mature ribosomes consist of a small (40S) and a large (60S) subunit. The 40S subunit contains about 33 different proteins and 1 molecule of RNA (18S). The 60S subunit contains about 49 different proteins and 3 molecules of RNA (25S, 5.8S and 5S).

It is found in the cytoplasm. The chain is Small ribosomal subunit protein eS1z from Vitis vinifera (Grape).